Consider the following 528-residue polypeptide: Benzoylformate decarboxylase (528 aa).

Mg(2+)-binding residues include Q117 and L118. The tract at residues 377 to 460 is thiamine pyrophosphate binding; that stretch reads TSTVTAFWQR…IILKNGTYGA (84 aa). Ca(2+)-binding residues include D428, N455, and T457.

Belongs to the TPP enzyme family. As to quaternary structure, homotetramer. The cofactor is Ca(2+). It depends on thiamine diphosphate as a cofactor. Requires Mg(2+) as cofactor.

It carries out the reaction phenylglyoxylate + H(+) = benzaldehyde + CO2. The protein operates within aromatic compound metabolism; (R)-mandelate degradation; benzoate from (R)-mandelate: step 3/4. The sequence is that of Benzoylformate decarboxylase (mdlC) from Pseudomonas aeruginosa (strain ATCC 15692 / DSM 22644 / CIP 104116 / JCM 14847 / LMG 12228 / 1C / PRS 101 / PAO1).